Consider the following 229-residue polypeptide: Casparian strip membrane protein 1 (229 aa).

The Cytoplasmic segment spans residues 1 to 67 (MSTSEAGAAA…FRRADRGSRC (67 aa)). The helical transmembrane segment at 68–88 (VALLDFVLRVAAFGPALAAAI) threads the bilayer. Over 89–115 (ATGTSDETLSVFTQFFQFHARFDDFPA) the chain is Extracellular. Residues 116–136 (LLFFMVANAIAAGYLVLSLPF) traverse the membrane as a helical segment. Over 137–157 (SAVIVLRPQAIGLRHLLLVCD) the chain is Cytoplasmic. Residues 158–178 (MIIAALLTAAAAAAAAIVDLA) form a helical membrane-spanning segment. Residues 179–205 (HSGNLRANWVPICMQFHGFCQRTSGAV) are Extracellular-facing. Residues 206 to 226 (VGSFLAVLVLLFLVILAAFAI) form a helical membrane-spanning segment. Residues 227-229 (RKR) lie on the Cytoplasmic side of the membrane.

It belongs to the Casparian strip membrane proteins (CASP) family. In terms of assembly, homodimer and heterodimers.

It localises to the cell membrane. Regulates membrane-cell wall junctions and localized cell wall deposition. Required for establishment of the Casparian strip membrane domain (CSD) and the subsequent formation of Casparian strips, a cell wall modification of the root endodermis that determines an apoplastic barrier between the intraorganismal apoplasm and the extraorganismal apoplasm and prevents lateral diffusion. The sequence is that of Casparian strip membrane protein 1 from Sorghum bicolor (Sorghum).